A 263-amino-acid polypeptide reads, in one-letter code: 4-hydroxy-2-oxo-heptane-1,7-dioate aldolase (263 aa).

His-45 functions as the Proton acceptor in the catalytic mechanism. Residue Gln-147 participates in substrate binding. Glu-149 provides a ligand contact to a divalent metal cation. Substrate contacts are provided by Ala-174 and Asp-175. An a divalent metal cation-binding site is contributed by Asp-175.

Belongs to the HpcH/HpaI aldolase family. In terms of assembly, homohexamer; trimer of dimers. A divalent metal cation serves as cofactor.

The catalysed reaction is 4-hydroxy-2-oxoheptanedioate = succinate semialdehyde + pyruvate. It functions in the pathway aromatic compound metabolism; 4-hydroxyphenylacetate degradation; pyruvate and succinate semialdehyde from 4-hydroxyphenylacetate: step 7/7. Catalyzes the reversible retro-aldol cleavage of 4-hydroxy-2-ketoheptane-1,7-dioate (HKHD) to pyruvate and succinic semialdehyde. In Salmonella typhimurium (strain LT2 / SGSC1412 / ATCC 700720), this protein is 4-hydroxy-2-oxo-heptane-1,7-dioate aldolase.